The chain runs to 79 residues: Cell division protein ZapB (79 aa).

Positions 3-79 (LEVFEKLEAK…QALLGRMEEV (77 aa)) form a coiled coil. At K8 the chain carries N6-acetyllysine. Positions 34–65 (NNSLSQEVQNAQHQREELERENNHLKEQQNGW) are disordered. The span at 35-45 (NSLSQEVQNAQ) shows a compositional bias: polar residues. Over residues 46 to 60 (HQREELERENNHLKE) the composition is skewed to basic and acidic residues.

Belongs to the ZapB family. In terms of assembly, homodimer. The ends of the coiled-coil dimer bind to each other, forming polymers. Interacts with FtsZ.

It localises to the cytoplasm. Non-essential, abundant cell division factor that is required for proper Z-ring formation. It is recruited early to the divisome by direct interaction with FtsZ, stimulating Z-ring assembly and thereby promoting cell division earlier in the cell cycle. Its recruitment to the Z-ring requires functional FtsA or ZipA. The protein is Cell division protein ZapB of Shigella boydii serotype 18 (strain CDC 3083-94 / BS512).